A 944-amino-acid polypeptide reads, in one-letter code: Putative alpha,alpha-trehalose-phosphate synthase [UDP-forming] 106 kDa subunit (944 aa).

The segment covering 73 to 84 (TNAQSNIATPSP) has biased composition (polar residues). 2 disordered regions span residues 73 to 113 (TNAQ…NSLS) and 129 to 166 (SKND…SELE). Positions 101–113 (PSSDSPSLENSLS) are enriched in low complexity. 6 positions are modified to phosphoserine: Ser141, Ser145, Ser149, Ser150, Ser163, and Ser177. Positions 173–652 (SRSLSFSMNG…AVTFQSLIKE (480 aa)) are glycosyltransferase. A Phosphothreonine modification is found at Thr189.

It in the N-terminal section; belongs to the glycosyltransferase 20 family.

The enzyme catalyses D-glucose 6-phosphate + UDP-alpha-D-glucose = alpha,alpha-trehalose 6-phosphate + UDP + H(+). The polypeptide is Putative alpha,alpha-trehalose-phosphate synthase [UDP-forming] 106 kDa subunit (Schizosaccharomyces pombe (strain 972 / ATCC 24843) (Fission yeast)).